The sequence spans 540 residues: MGFLTLFHMAFLAVSLFVSGALAAFGYTTSGNNFVIDAGSANPLIFSVSKSSCDINSIRYRGTELQYSKQGSHIGSGLGKATVSVSQINGSKSKFIKVTCVTSTLTQYMIVKEADSTIYMATYITAEPAIGELRFIARLLSDKLPYEYPYGEVSTTKGSSSTVEGSDVFVVNGQTRSKFYSSTRFIDEDSHCVYGGSDLTHVCIITPQQESSSGGPFFRDIDSNNAGESTNLYNYMNSGHVQTEDRRMGLHGPYLMTFSRSGIPKLKTVDISWFGELGVTGYVPDSQRGTVIGRATGIPSGFEGVVHWYNAAAQYWVRTAPNGDFTSPKMKPGTYTMVLYQTEFKVATSTVTVSAGKTTTASIASTFNTSHTTLFKIGEYDGQPTGFRNADKFLRMHPSDSRMSSWGPLTYTVGSSSLNDFPMAVFKSVNNPVTIKFNLGSAPSQATTLRIATTLSFAGARPQVVVNGWSAPAPAAPAKIDSRGVTRGAYRGYGEVYDVAVPAGKLISGTNTITISALSGSSGATFLSPNFIFDAVELFY.

The N-terminal stretch at 1–23 (MGFLTLFHMAFLAVSLFVSGALA) is a signal peptide. Intrachain disulfides connect C53/C100 and C192/C203. An N-linked (GlcNAc...) asparagine glycan is attached at N89. Residue N368 is glycosylated (N-linked (GlcNAc...) asparagine).

This sequence belongs to the polysaccharide lyase 4 family.

Its subcellular location is the secreted. It catalyses the reaction Endotype eliminative cleavage of L-alpha-rhamnopyranosyl-(1-&gt;4)-alpha-D-galactopyranosyluronic acid bonds of rhamnogalacturonan I domains in ramified hairy regions of pectin leaving L-rhamnopyranose at the reducing end and 4-deoxy-4,5-unsaturated D-galactopyranosyluronic acid at the non-reducing end.. Could be a pectinolytic enzyme that hydrolyzes the alpha-L-rhamnopyranosyl-(1,4)-alpha-D-galacturonopyranosyl glycosidic linkage by beta-elimination, thereby generating oligosaccharides terminating at the non-reducing end with a hex-4-enopyranosyluronic acid residue. This is Putative rhamnogalacturonase (asd-1) from Neurospora crassa (strain ATCC 24698 / 74-OR23-1A / CBS 708.71 / DSM 1257 / FGSC 987).